The chain runs to 313 residues: Phosphate import ATP-binding protein PstB 2 (313 aa).

The segment covering 1-33 (MSDSINTEPSTDTQTNGERTVETTSPSAETTAG) has biased composition (polar residues). Residues 1 to 40 (MSDSINTEPSTDTQTNGERTVETTSPSAETTAGESEEQVR) are disordered. The ABC transporter domain maps to 54–308 (LSVENLDVWY…PESQRVEDYI (255 aa)). 86 to 93 (GPSGCGKS) serves as a coordination point for ATP.

It belongs to the ABC transporter superfamily. Phosphate importer (TC 3.A.1.7) family. As to quaternary structure, the complex is composed of two ATP-binding proteins (PstB), two transmembrane proteins (PstC and PstA) and a solute-binding protein (PstS).

The protein localises to the cell membrane. It catalyses the reaction phosphate(out) + ATP + H2O = ADP + 2 phosphate(in) + H(+). Its function is as follows. Part of the ABC transporter complex PstSACB involved in phosphate import. Responsible for energy coupling to the transport system. The chain is Phosphate import ATP-binding protein PstB 2 from Haloarcula marismortui (strain ATCC 43049 / DSM 3752 / JCM 8966 / VKM B-1809) (Halobacterium marismortui).